The primary structure comprises 645 residues: Ethylene response sensor 2 (645 aa).

Transmembrane regions (helical) follow at residues L5–A25, V54–V74, V86–F106, and L125–L145. Positions 97 and 101 each coordinate Cu cation. The 157-residue stretch at D190–I346 folds into the GAF domain. The Histidine kinase domain maps to M389 to M623.

The protein belongs to the ethylene receptor family. In terms of assembly, heteromer with ETR1. Requires Cu cation as cofactor. Post-translationally, autophosphorylated predominantly on Ser residues. In terms of tissue distribution, expressed in etiolated seedlings, leaves, roots and stems. Highly expressed in flowers, stamens, pollen cells, tapetum cells, carpels and ovules.

The protein resides in the endoplasmic reticulum membrane. Its function is as follows. Ethylene receptor related to bacterial two-component regulators. Acts as a redundant negative regulator of ethylene signaling. The protein is Ethylene response sensor 2 (ERS2) of Arabidopsis thaliana (Mouse-ear cress).